Here is a 375-residue protein sequence, read N- to C-terminus: Alcohol dehydrogenase 4, mitochondrial (375 aa).

The N-terminal 27 residues, 1–27, are a transit peptide targeting the mitochondrion; it reads MFRLARAQTALANKASVSRSFLRLNSS. Residues Cys-71, His-94, Cys-125, Cys-128, Cys-131, Cys-139, and Cys-181 each coordinate Zn(2+). NAD(+)-binding positions include 205–211, Asp-229, Lys-234, 296–298, and Arg-368; these read GAAGGLG and VGL.

Belongs to the zinc-containing alcohol dehydrogenase family. In terms of assembly, homotetramer. Requires Zn(2+) as cofactor.

It is found in the mitochondrion matrix. The enzyme catalyses a primary alcohol + NAD(+) = an aldehyde + NADH + H(+). The catalysed reaction is a secondary alcohol + NAD(+) = a ketone + NADH + H(+). This Kluyveromyces lactis (strain ATCC 8585 / CBS 2359 / DSM 70799 / NBRC 1267 / NRRL Y-1140 / WM37) (Yeast) protein is Alcohol dehydrogenase 4, mitochondrial (ADH4).